Here is an 89-residue protein sequence, read N- to C-terminus: Small ribosomal subunit protein bS20 (89 aa).

Disordered regions lie at residues 1–25 (MANIKSAIKRAKTSEKRRAHNASMK) and 69–89 (KNAASRQKSRLAKKLNSIQAS). Positions 7 to 20 (AIKRAKTSEKRRAH) are enriched in basic residues.

Belongs to the bacterial ribosomal protein bS20 family.

In terms of biological role, binds directly to 16S ribosomal RNA. The polypeptide is Small ribosomal subunit protein bS20 (Geobacillus thermodenitrificans (strain NG80-2)).